The following is a 1275-amino-acid chain: Streptococcal hemoprotein receptor (1275 aa).

Positions 1 to 26 are cleaved as a signal peptide; the sequence is MKKISKCAFVAISALVLIQATQTVKS. The interval 61-123 is HID 1; the sequence is GKEYYKHIEK…KKDGDILITF (63 aa). Residues T87, R196, Y197, and M238 each contribute to the heme site. Residues 203–269 are HID 2; that stretch reads IKALTQQITK…KGFEDVTITV (67 aa). The region spanning 369 to 501 is the NEAT 1 domain; it reads LTEGTYTLNF…DMTFSKTVTK (133 aa). LRR repeat units lie at residues 544–567, 568–590, 592–614, 616–638, 639–662, 664–686, 687–710, 712–733, 734–757, 759–781, and 783–804; these read LEQI…LKHA, KNIT…LFSQ, KQLR…TFKS, AQLR…LFQS, LHHL…PFEG, SRLT…ALEP, LTSL…IEKL, ALST…SFKN, LPKL…IFKQ, NQLT…VFPD, and ETLN…VRAL. Residues 976–1138 enclose the NEAT 2 domain; that stretch reads LRDGIYYLNA…TTEKAKVVKE (163 aa). 3 disordered regions span residues 1137–1174, 1186–1205, and 1210–1248; these read KETN…SAAT, KATG…DKAE, and LVRD…ESSS. A compositionally biased stretch (polar residues) spans 1138–1166; the sequence is ETNNPQENSHLTSTDQLKGPQNRQQEKTP. Basic and acidic residues-rich tracts occupy residues 1196–1205 and 1210–1229; these read SKTDDTDKAE and LVRD…TKTK. Residues 1250–1269 form a helical membrane-spanning segment; the sequence is YHLIAGLSSFMIVALGFIIG.

It localises to the cell membrane. With respect to regulation, may modulate heme uptake according to heme availability. In the presence of high heme concentrations, NEAT 1 facilitates fast heme delivery to Shp, whereas NEAT 2 serves as a temporary storage for heme on the bacterial surface. When heme availability is limiting, heme from NEAT 2 is transferred back to NEAT 1 and from there to Shp. Functionally, hemoprotein receptor that plays a central role in the acquisition of host heme, a source of iron during bacterial infection, and is therefore an important virulence factor. Captures host hemoproteins and their iron-containing heme molecules, and transfers the heme to the cell surface heme-binding protein Shp. Plays a pivotal role in iron acquisition and growth under iron-starvation conditions. Uses a cap and release mechanism in which Shr forms a dynamic complex with hemoglobin that enables the gated release of its most labile heme molecule. This mechanism exploits the hemoglobin beta subunit's inherent weaker affinity for heme, allowing S.pyogenes to preferentially capture only heme-saturated forms of hemoglobin that contain iron. In vitro, binds directly to a variety of heme-containing proteins, including hemoglobin, myoglobin, heme albumin and the hemoglobin-haptoglobin complex. It also binds to and acquires heme from methemoglobin, the ferric form of hemoglobin, which is likely to be a physiologically relevant heme source for the hemolytic group A streptococcus (GAS). Seems to have an inherent ability to reduce the ferric heme present in methemoglobin to ferrous heme and to provide a stable environment for the produced ferrous complex. Does not bind apohemoglobin, apohaptoglobin, fibrinogen or streptavidin, indicating that it specifically recognizes hemoproteins. In terms of biological role, in addition to its role in heme acquisition, functions as an adhesin, contributing to host cell adhesion and hence virulence. Specifically binds to extracellular matrix (ECM) components, including fibronectin and laminin, and mediates bacterial attachment to host epithelial cells. This Streptococcus pyogenes serotype M1 protein is Streptococcal hemoprotein receptor.